The following is a 699-amino-acid chain: Endoplasmic reticulum mannosyl-oligosaccharide 1,2-alpha-mannosidase (699 aa).

At 1–84 (MAACEGRRSG…WKQLSRLQRN (84 aa)) the chain is on the cytoplasmic side. The chain crosses the membrane as a helical; Signal-anchor for type II membrane protein span at residues 85–105 (MILFLLAFLLFCGLLFYINLA). The Lumenal segment spans residues 106 to 699 (DHWKALAFRL…AHPLPIWTPA (594 aa)). Residues 125–243 (IAGLKPANPP…LPPARTQGTP (119 aa)) are disordered. The segment covering 176–201 (DLKDGTQEEATKRQEAPVDPRPEGDP) has biased composition (basic and acidic residues). E330 functions as the Proton donor in the catalytic mechanism. D463 is an active-site residue. Residues C527 and C556 are joined by a disulfide bond. The Proton donor role is filled by E570. E599 is a catalytic residue. T688 lines the Ca(2+) pocket.

It belongs to the glycosyl hydrolase 47 family. Requires Ca(2+) as cofactor. In terms of tissue distribution, widely expressed.

The protein localises to the endoplasmic reticulum membrane. It catalyses the reaction N(4)-(alpha-D-Man-(1-&gt;2)-alpha-D-Man-(1-&gt;2)-alpha-D-Man-(1-&gt;3)-[alpha-D-Man-(1-&gt;2)-alpha-D-Man-(1-&gt;3)-[alpha-D-Man-(1-&gt;2)-alpha-D-Man-(1-&gt;6)]-alpha-D-Man-(1-&gt;6)]-beta-D-Man-(1-&gt;4)-beta-D-GlcNAc-(1-&gt;4)-beta-D-GlcNAc)-L-asparaginyl-[protein] (N-glucan mannose isomer 9A1,2,3B1,2,3) + 4 H2O = N(4)-(alpha-D-Man-(1-&gt;3)-[alpha-D-Man-(1-&gt;3)-[alpha-D-Man-(1-&gt;6)]-alpha-D-Man-(1-&gt;6)]-beta-D-Man-(1-&gt;4)-beta-D-GlcNAc-(1-&gt;4)-beta-D-GlcNAc)-L-asparaginyl-[protein] (N-glucan mannose isomer 5A1,2) + 4 beta-D-mannose. It carries out the reaction N(4)-(alpha-D-Man-(1-&gt;2)-alpha-D-Man-(1-&gt;2)-alpha-D-Man-(1-&gt;3)-[alpha-D-Man-(1-&gt;3)-[alpha-D-Man-(1-&gt;2)-alpha-D-Man-(1-&gt;6)]-alpha-D-Man-(1-&gt;6)]-beta-D-Man-(1-&gt;4)-beta-D-GlcNAc-(1-&gt;4)-beta-D-GlcNAc)-L-asparaginyl-[protein] (N-glucan mannose isomer 8A1,2,3B1,3) + 3 H2O = N(4)-(alpha-D-Man-(1-&gt;3)-[alpha-D-Man-(1-&gt;3)-[alpha-D-Man-(1-&gt;6)]-alpha-D-Man-(1-&gt;6)]-beta-D-Man-(1-&gt;4)-beta-D-GlcNAc-(1-&gt;4)-beta-D-GlcNAc)-L-asparaginyl-[protein] (N-glucan mannose isomer 5A1,2) + 3 beta-D-mannose. The protein operates within protein modification; protein glycosylation. Its activity is regulated as follows. Inhibited by both 1-deoxymannojirimycin (dMNJ) and kifunensine. Its function is as follows. Involved in glycoprotein quality control targeting of misfolded glycoproteins for degradation. It primarily trims a single alpha-1,2-linked mannose residue from Man(9)GlcNAc(2) to produce Man(8)GlcNAc(2), but at high enzyme concentrations, as found in the ER quality control compartment (ERQC), it further trims the carbohydrates to Man(5-6)GlcNAc(2). The polypeptide is Endoplasmic reticulum mannosyl-oligosaccharide 1,2-alpha-mannosidase (MAN1B1) (Homo sapiens (Human)).